The primary structure comprises 130 residues: Small ribosomal subunit protein uS8 (130 aa).

Belongs to the universal ribosomal protein uS8 family. Part of the 30S ribosomal subunit.

Its function is as follows. One of the primary rRNA binding proteins, it binds directly to 16S rRNA central domain where it helps coordinate assembly of the platform of the 30S subunit. This is Small ribosomal subunit protein uS8 from Pyrococcus abyssi (strain GE5 / Orsay).